Consider the following 488-residue polypeptide: Glutamyl-tRNA(Gln) amidotransferase subunit A (488 aa).

Catalysis depends on charge relay system residues Lys77 and Ser152. Catalysis depends on Ser176, which acts as the Acyl-ester intermediate.

The protein belongs to the amidase family. GatA subfamily. In terms of assembly, heterotrimer of A, B and C subunits.

The enzyme catalyses L-glutamyl-tRNA(Gln) + L-glutamine + ATP + H2O = L-glutaminyl-tRNA(Gln) + L-glutamate + ADP + phosphate + H(+). In terms of biological role, allows the formation of correctly charged Gln-tRNA(Gln) through the transamidation of misacylated Glu-tRNA(Gln) in organisms which lack glutaminyl-tRNA synthetase. The reaction takes place in the presence of glutamine and ATP through an activated gamma-phospho-Glu-tRNA(Gln). This chain is Glutamyl-tRNA(Gln) amidotransferase subunit A, found in Streptococcus pyogenes serotype M5 (strain Manfredo).